A 275-amino-acid chain; its full sequence is 4-diphosphocytidyl-2-C-methyl-D-erythritol kinase (275 aa).

Lys-9 is a catalytic residue. Residue 90–100 (PVGGGLGGGSS) coordinates ATP. The active site involves Asp-132.

This sequence belongs to the GHMP kinase family. IspE subfamily.

The catalysed reaction is 4-CDP-2-C-methyl-D-erythritol + ATP = 4-CDP-2-C-methyl-D-erythritol 2-phosphate + ADP + H(+). The protein operates within isoprenoid biosynthesis; isopentenyl diphosphate biosynthesis via DXP pathway; isopentenyl diphosphate from 1-deoxy-D-xylulose 5-phosphate: step 3/6. Functionally, catalyzes the phosphorylation of the position 2 hydroxy group of 4-diphosphocytidyl-2C-methyl-D-erythritol. The protein is 4-diphosphocytidyl-2-C-methyl-D-erythritol kinase of Sulfurihydrogenibium sp. (strain YO3AOP1).